Consider the following 787-residue polypeptide: Protein translocase subunit SecA (787 aa).

ATP is bound by residues Gln-85, 103-107 (GEGKT), and Asp-492.

Belongs to the SecA family. Monomer and homodimer. Part of the essential Sec protein translocation apparatus which comprises SecA, SecYEG and auxiliary proteins SecDF. Other proteins may also be involved.

Its subcellular location is the cell membrane. The protein localises to the cytoplasm. The enzyme catalyses ATP + H2O + cellular proteinSide 1 = ADP + phosphate + cellular proteinSide 2.. Functionally, part of the Sec protein translocase complex. Interacts with the SecYEG preprotein conducting channel. Has a central role in coupling the hydrolysis of ATP to the transfer of proteins into and across the cell membrane, serving as an ATP-driven molecular motor driving the stepwise translocation of polypeptide chains across the membrane. This is Protein translocase subunit SecA from Lactiplantibacillus plantarum (strain ATCC BAA-793 / NCIMB 8826 / WCFS1) (Lactobacillus plantarum).